Reading from the N-terminus, the 145-residue chain is uncharacterized protein (145 aa).

Residues valine 97 and asparagine 121 each contribute to the substrate site.

It belongs to the D-isomer specific 2-hydroxyacid dehydrogenase family. FDH subfamily.

This is an uncharacterized protein from Saccharomyces cerevisiae (strain ATCC 204508 / S288c) (Baker's yeast).